We begin with the raw amino-acid sequence, 431 residues long: Asparagine--tRNA ligase (431 aa).

Belongs to the class-II aminoacyl-tRNA synthetase family.

It is found in the cytoplasm. The enzyme catalyses tRNA(Asn) + L-asparagine + ATP = L-asparaginyl-tRNA(Asn) + AMP + diphosphate + H(+). The chain is Asparagine--tRNA ligase from Thermococcus kodakarensis (strain ATCC BAA-918 / JCM 12380 / KOD1) (Pyrococcus kodakaraensis (strain KOD1)).